Consider the following 118-residue polypeptide: Actin depolymerizing factor ADF (118 aa).

Positions Gly4 to Ala118 constitute an ADF-H domain.

Belongs to the actin-binding proteins ADF family. As to quaternary structure, interacts with ACT1 (G-actin); the interaction results in inhibition of actin polymerization. Interacts with DPA; the interaction enhances ADF activity in disassembly of filamentous actin and inhibition of actin polymerization.

Its subcellular location is the cytoplasm. Functionally, inhibits actin polymerization. Promotes actin depolymerization. Strongly sequesters actin monomers (G-actin). Weakly severs actin filaments (F-actin). This is Actin depolymerizing factor ADF from Toxoplasma gondii.